The chain runs to 403 residues: GPI-N-acetylgalactosamine transferase PGAP4 (403 aa).

The Cytoplasmic segment spans residues Met1–Ser22. The helical transmembrane segment at Thr23–Cys43 threads the bilayer. Topologically, residues His44 to Pro259 are lumenal. Residue Asn87 is glycosylated (N-linked (GalNAc...) asparagine). Val109 is a UDP-N-acetyl-alpha-D-galactosamine binding site. 2 disulfides stabilise this stretch: Cys132/Cys136 and Cys144/Cys194. Residues Glu211–Asp213 carry the DXD motif motif. A helical transmembrane segment spans residues Met260 to Tyr280. At Met281 to Pro287 the chain is on the cytoplasmic side. Residues Gly288–Val308 traverse the membrane as a helical segment. Topologically, residues Gly309–Leu403 are lumenal. Cys332 and Cys333 are oxidised to a cystine. The UDP-N-acetyl-alpha-D-galactosamine site is built by Thr334, Pro335, and Lys362.

The protein belongs to the PGAP4 family. Post-translationally, glycosylated.

It is found in the golgi apparatus membrane. Golgi-resident glycosylphosphatidylinositol (GPI)-N-acetylgalactosamine transferase that catalyzes the N-acetyl-beta-D-galactosamine transfer from an UDP-N-acetyl-alpha-D-galactosamine to the 4-OH-position of the first mannose of the glycosylphosphatidylinositol (GPI) of a GPI-anchored protein (GPI-AP). This modification occurs after the fatty acid remodeling step of the GPI-anchor maturation. This chain is GPI-N-acetylgalactosamine transferase PGAP4, found in Homo sapiens (Human).